Consider the following 446-residue polypeptide: Phosphoglucosamine mutase (446 aa).

S102 functions as the Phosphoserine intermediate in the catalytic mechanism. 4 residues coordinate Mg(2+): S102, D239, D241, and D243. S102 is subject to Phosphoserine.

It belongs to the phosphohexose mutase family. Mg(2+) serves as cofactor. Activated by phosphorylation.

It catalyses the reaction alpha-D-glucosamine 1-phosphate = D-glucosamine 6-phosphate. Functionally, catalyzes the conversion of glucosamine-6-phosphate to glucosamine-1-phosphate. This chain is Phosphoglucosamine mutase, found in Solibacter usitatus (strain Ellin6076).